The primary structure comprises 248 residues: ATP synthase subunit a, chloroplastic (248 aa).

The next 5 membrane-spanning stretches (helical) occupy residues 38-58 (QVLI…TLAV), 96-116 (VPFI…GALF), 135-155 (INTT…AGFT), 200-220 (LVVA…VMFL), and 221-241 (GLFT…AYIG).

Belongs to the ATPase A chain family. In terms of assembly, F-type ATPases have 2 components, CF(1) - the catalytic core - and CF(0) - the membrane proton channel. CF(1) has five subunits: alpha(3), beta(3), gamma(1), delta(1), epsilon(1). CF(0) has four main subunits: a, b, b' and c.

It is found in the plastid. The protein localises to the chloroplast thylakoid membrane. Key component of the proton channel; it plays a direct role in the translocation of protons across the membrane. The chain is ATP synthase subunit a, chloroplastic from Cryptomeria japonica (Japanese cedar).